The following is a 236-amino-acid chain: Auxin-responsive protein IAA16 (236 aa).

The EAR-like (transcriptional repression) motif lies at 9-13; the sequence is LRLGL. A disordered region spans residues 82 to 110; that stretch reads KNVMSGQKPTTGDATEGNDKTSGSSGATS. Polar residues predominate over residues 85–94; it reads MSGQKPTTGD. The PB1 domain maps to 118-218; that stretch reads VAYVKVSMDG…SCKRIRIMKG (101 aa).

This sequence belongs to the Aux/IAA family. In terms of assembly, homodimers and heterodimers.

Its subcellular location is the nucleus. Functionally, aux/IAA proteins are short-lived transcriptional factors that function as repressors of early auxin response genes at low auxin concentrations. Repression is thought to result from the interaction with auxin response factors (ARFs), proteins that bind to the auxin-responsive promoter element (AuxRE). Formation of heterodimers with ARF proteins may alter their ability to modulate early auxin response genes expression. This chain is Auxin-responsive protein IAA16 (IAA16), found in Arabidopsis thaliana (Mouse-ear cress).